Consider the following 436-residue polypeptide: UPF0597 protein YhaM (436 aa).

Belongs to the UPF0597 family.

The chain is UPF0597 protein YhaM from Salmonella paratyphi A (strain ATCC 9150 / SARB42).